The following is a 385-amino-acid chain: U6 small nuclear RNA (adenine-(43)-N(6))-methyltransferase (385 aa).

Arg54, Gly83, Glu106, and Asn155 together coordinate S-adenosyl-L-methionine.

It belongs to the methyltransferase superfamily. METTL16/RlmF family.

It localises to the cytoplasm. The protein localises to the nucleus. The catalysed reaction is adenosine in U6 snRNA + S-adenosyl-L-methionine = N(6)-methyladenosine in U6 snRNA + S-adenosyl-L-homocysteine + H(+). In terms of biological role, RNA N6-methyltransferase that mediates N6-methylation of adenine of U6 small nuclear RNA (U6 snRNA). The sequence is that of U6 small nuclear RNA (adenine-(43)-N(6))-methyltransferase from Schizosaccharomyces pombe (strain 972 / ATCC 24843) (Fission yeast).